Reading from the N-terminus, the 433-residue chain is Glutamate-1-semialdehyde 2,1-aminomutase (433 aa).

Lys-266 is modified (N6-(pyridoxal phosphate)lysine).

It belongs to the class-III pyridoxal-phosphate-dependent aminotransferase family. HemL subfamily. Homodimer. Requires pyridoxal 5'-phosphate as cofactor.

The protein resides in the cytoplasm. It carries out the reaction (S)-4-amino-5-oxopentanoate = 5-aminolevulinate. The protein operates within porphyrin-containing compound metabolism; protoporphyrin-IX biosynthesis; 5-aminolevulinate from L-glutamyl-tRNA(Glu): step 2/2. The chain is Glutamate-1-semialdehyde 2,1-aminomutase from Psychrobacter arcticus (strain DSM 17307 / VKM B-2377 / 273-4).